A 90-amino-acid polypeptide reads, in one-letter code: Acylphosphatase (90 aa).

The 88-residue stretch at 3–90 (QRQFTVYGCV…RVFSDFTIER (88 aa)) folds into the Acylphosphatase-like domain. Residues arginine 18 and asparagine 36 contribute to the active site.

The protein belongs to the acylphosphatase family.

The catalysed reaction is an acyl phosphate + H2O = a carboxylate + phosphate + H(+). In Actinobacillus succinogenes (strain ATCC 55618 / DSM 22257 / CCUG 43843 / 130Z), this protein is Acylphosphatase (acyP).